We begin with the raw amino-acid sequence, 212 residues long: KxDL motif-containing protein CG10681 (212 aa).

Residues 128 to 159 are disordered; it reads RSSLAEEAEDDTEAQAKKTAETPAPAAAKPVL. Residues 148–157 show a composition bias toward low complexity; the sequence is ETPAPAAAKP.

Belongs to the KXD1 family.

The protein is KxDL motif-containing protein CG10681 of Drosophila melanogaster (Fruit fly).